Reading from the N-terminus, the 116-residue chain is U11-theraphotoxin-Hhn1b (116 aa).

The signal sequence occupies residues 1–21 (MNTVRVTFLLVFVLAVSLGQA). The propeptide occupies 22-74 (DKDENRMEMQEKTEQGKSYLDFAENLLLQKLEELEAKLLEEDSEESRNSRQKR). Positions 60–69 (LEEDSEESRN) are enriched in basic and acidic residues. Residues 60 to 83 (LEEDSEESRNSRQKRCIGEGVPCD) are disordered. 3 cysteine pairs are disulfide-bonded: cysteine 75-cysteine 90, cysteine 82-cysteine 95, and cysteine 89-cysteine 110.

Belongs to the neurotoxin 14 (magi-1) family. 01 (HNTX-16) subfamily. In terms of tissue distribution, expressed by the venom gland.

It localises to the secreted. Its function is as follows. Probable ion channel inhibitor. The chain is U11-theraphotoxin-Hhn1b from Cyriopagopus hainanus (Chinese bird spider).